Reading from the N-terminus, the 239-residue chain is Ras-like protein B (239 aa).

Residues 13–18 (GVGKTA), 29–35 (VETYDPT), 59–60 (AG), 139–142 (NKSD), and 169–171 (SAK) each bind GTP. Residues 32–40 (YDPTIEDSY) carry the Effector region motif. Positions 191–227 (RQQQQGGRAQDRRPTGLGPMRDRDAGPEYPKTFRPDR) are disordered. Basic and acidic residues predominate over residues 199–226 (AQDRRPTGLGPMRDRDAGPEYPKTFRPD).

It belongs to the small GTPase superfamily. Ras family. In terms of assembly, interacts with mpkA.

It carries out the reaction GTP + H2O = GDP + phosphate + H(+). Functionally, ras-like protein involved in the activation of Ras protein signal transduction. Ras proteins bind GDP/GTP and possess intrinsic GTPase activity. Plays a role in hyphal morphology and conidiophore development. Required for full virulence. The sequence is that of Ras-like protein B from Aspergillus fumigatus (strain ATCC MYA-4609 / CBS 101355 / FGSC A1100 / Af293) (Neosartorya fumigata).